Reading from the N-terminus, the 150-residue chain is MTDLGQAGESLVAAWLEQQGGKILQQRWRSPWGEIDLITHFPDTKIIAFVEVKTRSGGNWDQGGLLAVNARKQEKIWQTANHFLASQPQWSDWNCRFDVMIVFSQGSVPTGENAEGKFANLPTNFQMGQTIVWQGYRLRLEQYLTDAFGG.

This sequence belongs to the UPF0102 family.

The polypeptide is UPF0102 protein sll0189 (Synechocystis sp. (strain ATCC 27184 / PCC 6803 / Kazusa)).